The following is a 221-amino-acid chain: Urease accessory protein UreF (221 aa).

Belongs to the UreF family. In terms of assembly, ureD, UreF and UreG form a complex that acts as a GTP-hydrolysis-dependent molecular chaperone, activating the urease apoprotein by helping to assemble the nickel containing metallocenter of UreC. The UreE protein probably delivers the nickel.

Its subcellular location is the cytoplasm. Its function is as follows. Required for maturation of urease via the functional incorporation of the urease nickel metallocenter. The protein is Urease accessory protein UreF of Teredinibacter turnerae (strain ATCC 39867 / T7901).